Consider the following 538-residue polypeptide: Atos homolog protein B (538 aa).

Polar residues-rich tracts occupy residues 1 to 12 and 129 to 141; these read MRHVQAETSPSS and GGSS…SGAR. Disordered stretches follow at residues 1–98, 129–185, and 201–303; these read MRHV…EPPT, GGSS…QLHT, and LVSG…PTDC. Over residues 227-238 the composition is skewed to pro residues; it reads HTPPGPGPPGPC. Phosphoserine is present on residues serine 254 and serine 255. The tract at residues 348–430 is required for macropage invasion; that stretch reads LLGNFEESLL…VPKVGTIQVT (83 aa). Residues 436-444 form a transactivation domain 1 (TAD1) region; that stretch reads QTVVKMFLV.

It belongs to the ATOS family.

Its subcellular location is the nucleus. In terms of biological role, transcription regulator that may syncronize transcriptional and translational programs. The polypeptide is Atos homolog protein B (Bos taurus (Bovine)).